Consider the following 437-residue polypeptide: Aspartokinase (437 aa).

The protein belongs to the aspartokinase family.

The enzyme catalyses L-aspartate + ATP = 4-phospho-L-aspartate + ADP. It participates in amino-acid biosynthesis; L-lysine biosynthesis via DAP pathway; (S)-tetrahydrodipicolinate from L-aspartate: step 1/4. It functions in the pathway amino-acid biosynthesis; L-methionine biosynthesis via de novo pathway; L-homoserine from L-aspartate: step 1/3. The protein operates within amino-acid biosynthesis; L-threonine biosynthesis; L-threonine from L-aspartate: step 1/5. This Chlamydia muridarum (strain MoPn / Nigg) protein is Aspartokinase (lysC).